Consider the following 595-residue polypeptide: DNA mismatch repair protein MutL (595 aa).

This sequence belongs to the DNA mismatch repair MutL/HexB family.

In terms of biological role, this protein is involved in the repair of mismatches in DNA. It is required for dam-dependent methyl-directed DNA mismatch repair. May act as a 'molecular matchmaker', a protein that promotes the formation of a stable complex between two or more DNA-binding proteins in an ATP-dependent manner without itself being part of a final effector complex. This is DNA mismatch repair protein MutL from Rhodopseudomonas palustris (strain ATCC BAA-98 / CGA009).